Here is a 5146-residue protein sequence, read N- to C-terminus: SCO-spondin (5146 aa).

Residues 1–17 form the signal peptide; it reads MLLPALLFGAAWALANG. Positions 18-94 constitute an EMI domain; it reads RWCEQTETVL…ACCPGWGGTH (77 aa). N-linked (GlcNAc...) asparagine glycosylation is found at Asn-80, Asn-122, and Asn-153. A VWFD 1 domain is found at 185–356; it reads ATCATWSGFH…RLPDSELGCL (172 aa). 3 cysteine pairs are disulfide-bonded: Cys-187–Cys-317, Cys-209–Cys-355, and Cys-231–Cys-237. Asn-255 carries an N-linked (GlcNAc...) asparagine glycan. The TIL 1 domain maps to 464–519; the sequence is CPGGQLYSDCASACPPSCSAVGEGSEWSCGEECVSGCECPPGLFWDGALCVPAARC. A VWFD 2 domain is found at 557–730; that stretch reads AECAVGGDGH…FQVAGGGTCS (174 aa). Intrachain disulfides connect Cys-559–Cys-692 and Cys-583–Cys-729. A glycan (N-linked (GlcNAc...) asparagine) is linked at Asn-814. Residues 822–875 enclose the TIL 2 domain; it reads CPGGQEYQECAPACDRNCGEPEDCGELDNCVAGCNCPLGLLWDPEGQCVPPNLC. Asn-906 carries an N-linked (GlcNAc...) asparagine glycan. Residues 1008–1178 form the VWFD 3 domain; that stretch reads GRCRASGAPH…HSWRLGPLCP (171 aa). Intrachain disulfides connect Cys-1010/Cys-1142, Cys-1032/Cys-1177, and Cys-1053/Cys-1060. Positions 1271–1327 constitute a TIL 3 domain; the sequence is CERGQVYEACGPTCPATCHDHRPEPGWPCRAVACVEGCFCPEGTLLHGGVCLEPAAC. An N-linked (GlcNAc...) asparagine glycan is attached at Asn-1349. 6 consecutive LDL-receptor class A domains span residues 1372–1409, 1412–1447, 1448–1484, 1488–1526, 1561–1597, and 1599–1638; these read GCAEGETPCRESGHCVPHGWLCDNQDDCGDGSDEEGCA, VCGEGQVSCCSGRCLPLVLLCDGQDDCGDGMDEQGC, PCPQDSLTCADGHCLPPARLCDGHPDCPDGADEESCL, DCAPGEVSCVDGTCLGAIQLCDGVWDCLDGGDEGPGHCP, PCGPLDFACGSGECAPRGWRCDGEEDCADGSDESGCD, and PCAPHHAPCARGSHCVAAEQLCDGVPHCPDGSDEDPGACE. Disulfide bonds link Cys-1373-Cys-1386, Cys-1380-Cys-1399, Cys-1393-Cys-1408, Cys-1413-Cys-1425, Cys-1420-Cys-1438, Cys-1432-Cys-1447, Cys-1449-Cys-1461, Cys-1456-Cys-1474, Cys-1468-Cys-1483, Cys-1489-Cys-1501, Cys-1496-Cys-1514, Cys-1508-Cys-1525, Cys-1562-Cys-1574, Cys-1569-Cys-1587, Cys-1581-Cys-1596, Cys-1600-Cys-1613, Cys-1607-Cys-1626, and Cys-1620-Cys-1637. A glycan (N-linked (GlcNAc...) asparagine) is linked at Asn-1647. One can recognise an LDL-receptor class A 7 domain in the interval 1652 to 1690; sequence PCPEYSCPDGLCIGFQQVCDGQPDCELAGTAGPSPEEQG. TSP type-1 domains are found at residues 1691-1745 and 1747-1805; these read CGAW…AACP and DGVW…DGCP. 3 cysteine pairs are disulfide-bonded: Cys-1703/Cys-1739, Cys-1707/Cys-1744, and Cys-1718/Cys-1729. Asn-1806 is a glycosylation site (N-linked (GlcNAc...) asparagine). The region spanning 1809–1865 is the TIL 4 domain; that stretch reads CSGELVFHACVPCPLTCDDISGQATCPPDRPCGGPGCWCPAGQVLGAQGRCVWPRQC. EGF-like domains are found at residues 1821-1860 and 1861-1898; these read CPLTCDDISGQATCPPDRPCGGPGCWCPAGQVLGAQGRCV and WPRQCPCLVDGSRYWPGQRVKTDCQLCVCQDGRPRRCQ. Residues 1906–1962 enclose the TSP type-1 3 domain; the sequence is NCGWSAWSPWAECLGPCGSRSVQWSFRSPNNPRPAGRGHQCRGLHRKARRCQTEPCE. 3 disulfides stabilise this stretch: Cys-1907-Cys-1946, Cys-1918-Cys-1922, and Cys-1956-Cys-1961. Positions 1962 to 2022 constitute a VWFC 1 domain; sequence EGCEQDGRVH…GVGESCCHCV (61 aa). 2 N-linked (GlcNAc...) asparagine glycosylation sites follow: Asn-2027 and Asn-2127. Disulfide bonds link Cys-2062–Cys-2220, Cys-2226–Cys-2238, Cys-2233–Cys-2251, and Cys-2245–Cys-2260. The F5/8 type C domain maps to 2062–2220; sequence CYSPLGLARL…GPLRVELLGC (159 aa). The region spanning 2225–2261 is the LDL-receptor class A 8 domain; the sequence is LCLGVGHRCVSGECAPRGAPCDGVEDCKDGSDEEGCV. The tract at residues 2262-2346 is disordered; it reads TPPAGAGRIE…TPTSQPEAQA (85 aa). 2 stretches are compositionally biased toward polar residues: residues 2273–2284 and 2331–2343; these read TAWSSAPSSAQP and GSVQTVTPTSQPE. LDL-receptor class A domains are found at residues 2382–2418 and 2442–2478; these read QCSPGQVPCEVLGCVELEQLCDGREDCLDGSDERPCA and LCSPSQLTCGSGECLPVERRCDLQLDCQDGSDENGCV. Intrachain disulfides connect Cys-2383/Cys-2395, Cys-2390/Cys-2408, Cys-2402/Cys-2417, Cys-2443/Cys-2455, Cys-2450/Cys-2468, Cys-2462/Cys-2477, Cys-2480/Cys-2516, Cys-2491/Cys-2495, Cys-2526/Cys-2531, Cys-2546/Cys-2583, Cys-2550/Cys-2588, and Cys-2561/Cys-2573. TSP type-1 domains follow at residues 2479-2532 and 2534-2589; these read DCGL…QACP and AGAW…QPCA. The 44-residue stretch at 2611–2654 folds into the TIL 5 domain; that stretch reads VPPCPPSCLDPEANRSCSGLCLEGCRCPPGLLLQDAGCLPLSEC. Asn-2624 and Asn-2673 each carry an N-linked (GlcNAc...) asparagine glycan. TSP type-1 domains follow at residues 2694–2748, 2751–2807, and 2809–2862; these read PCGW…SACG, VPGW…PVCL, and LGVW…QPCT. 9 disulfides stabilise this stretch: Cys-2695–Cys-2733, Cys-2706–Cys-2710, Cys-2743–Cys-2747, Cys-2763–Cys-2801, Cys-2767–Cys-2806, Cys-2783–Cys-2791, Cys-2821–Cys-2856, Cys-2825–Cys-2861, and Cys-2836–Cys-2846. N-linked (GlcNAc...) asparagine glycans are attached at residues Asn-2915 and Asn-2946. TSP type-1 domains are found at residues 2964 to 3019 and 3020 to 3071; these read ACGW…RPCG and GPAG…GVCP. 3 disulfide bridges follow: Cys-2965-Cys-3003, Cys-2976-Cys-2980, and Cys-3013-Cys-3018. The N-linked (GlcNAc...) asparagine glycan is linked to Asn-3041. One can recognise a TIL 6 domain in the interval 3070-3122; sequence CPPGKRWLDCAQGPASCAELSAPRGADQPCHPGCYCPSGMLLLNNACVPTQDC. N-linked (GlcNAc...) asparagine glycans are attached at residues Asn-3143 and Asn-3153. TSP type-1 domains follow at residues 3163-3230 and 3232-3287; these read QPTW…PECD and AGGW…LPCP. 6 disulfides stabilise this stretch: Cys-3175–Cys-3224, Cys-3179–Cys-3229, Cys-3190–Cys-3214, Cys-3244–Cys-3281, Cys-3248–Cys-3286, and Cys-3259–Cys-3271. A glycan (N-linked (GlcNAc...) asparagine) is linked at Asn-3290. The region spanning 3295–3345 is the TIL 7 domain; it reads EGAEYSACGPPCPRSCDDLVHCVWHCQPGCYCPPGQVLSADGTVHVQPGHC. TSP type-1 domains follow at residues 3388–3450 and 3452–3507; these read PGAW…PECP and DGAW…TQCT. 6 disulfide bridges follow: Cys-3400–Cys-3443, Cys-3404–Cys-3449, Cys-3415–Cys-3427, Cys-3464–Cys-3499, Cys-3467–Cys-3506, and Cys-3477–Cys-3489. N-linked (GlcNAc...) asparagine glycosylation is found at Asn-3502, Asn-3580, and Asn-3607. The 49-residue stretch at 3626–3674 folds into the TSP type-1 15 domain; the sequence is LGLWGSWGPWEDCSVSCGGGEQLRFRRCPRPPCPGPARQSRTCRTQVCR. Cystine bridges form between Cys-3638/Cys-3668, Cys-3642/Cys-3673, and Cys-3653/Cys-3658. N-linked (GlcNAc...) asparagine glycosylation is present at Asn-3783. 4 consecutive TSP type-1 domains span residues 3802 to 3858, 3872 to 3924, 3938 to 3994, and 3996 to 4051; these read AGGF…PECP, PGGW…PSCT, NCSW…RACP, and PGGW…TPCE. 3 cysteine pairs are disulfide-bonded: Cys-3814/Cys-3852, Cys-3818/Cys-3857, and Cys-3830/Cys-3842. Asn-3906 and Asn-3938 each carry an N-linked (GlcNAc...) asparagine glycan. 6 disulfide bridges follow: Cys-3939–Cys-3975, Cys-3950–Cys-3954, Cys-3988–Cys-3993, Cys-4008–Cys-4045, Cys-4012–Cys-4050, and Cys-4023–Cys-4035. The TIL 8 domain maps to 4054–4109; the sequence is CPAGMEVVSCANRCPRRCSDLQEGIVCQEDQACQQGCRCPEGSLEQDGGCVPLGHC. The 68-residue stretch at 4101–4168 folds into the VWFC 2 domain; the sequence is GGCVPLGHCE…AWSPCSRSCG (68 aa). A glycan (N-linked (GlcNAc...) asparagine) is linked at Asn-4131. 4 TSP type-1 domains span residues 4151 to 4204, 4245 to 4300, 4302 to 4358, and 4360 to 4414; these read HCAW…SPCP, LGAW…WPCP, LPDT…GPCL, and ECVW…GNCS. Disulfide bonds link Cys-4152-Cys-4188, Cys-4163-Cys-4167, Cys-4198-Cys-4203, Cys-4257-Cys-4294, Cys-4261-Cys-4299, and Cys-4272-Cys-4284. N-linked (GlcNAc...) asparagine glycosylation is present at Asn-4341. Disulfide bonds link Cys-4361/Cys-4398, Cys-4372/Cys-4374, and Cys-4408/Cys-4413. Asn-4412 carries N-linked (GlcNAc...) asparagine glycosylation. Residues 4418 to 4473 enclose the TIL 9 domain; the sequence is CAPPFEFQACGSPCTGLCATYLSPWLCQDLPPCQPGCYCPEGLLEQAGGCVPPEQC. One can recognise a TSP type-1 24 domain in the interval 4610–4661; that stretch reads LCQWGPWGAWSPCQVPCSGGFRLRWREAGIPPGGGCRGPWAQTESCNMGPCP. 3 disulfide bridges follow: Cys-4611–Cys-4645, Cys-4622–Cys-4626, and Cys-4655–Cys-4660. The region spanning 4675–4721 is the TIL 10 domain; the sequence is DCANQCPRSCVDLWDRVECLQGPCRPGCRCPPGQLVQDGHCVPVSSC. N-linked (GlcNAc...) asparagine glycosylation is found at Asn-4729, Asn-4746, Asn-4751, and Asn-4772. The TSP type-1 25 domain occupies 4761 to 4814; sequence CPTLGPWSAWSNCSAPCGGGTTKRHRSCKEGPGVTPCQAQDMEQQQDCNLQPCP. Cystine bridges form between Cys-4773–Cys-4808, Cys-4777–Cys-4813, and Cys-4788–Cys-4797. A TIL 11 domain is found at 4816-4870; that stretch reads CPPGQVLSACAVSCPRLCSHLQPGTPCMQEPCQLGCDCPRGQLLHNGTCVPPAEC. 4 N-linked (GlcNAc...) asparagine glycosylation sites follow: Asn-4861, Asn-4901, Asn-4947, and Asn-4954. A VWFC 3 domain is found at 4983 to 5041; it reads CECWHHGRPHPPGSEWQKACESCRCVSGESICTQHCPPLTCAQGETAVQEPGGCCPTCR. 4 disulfides stabilise this stretch: Cys-5052/Cys-5100, Cys-5066/Cys-5117, Cys-5076/Cys-5133, and Cys-5080/Cys-5135. In terms of domain architecture, CTCK spans 5052 to 5139; sequence CRHLTELRNL…IHSCQCSACQ (88 aa). The N-linked (GlcNAc...) asparagine glycan is linked to Asn-5060.

The protein belongs to the thrombospondin family. As to expression, subcommissural organ. Located at the boundary of the diencephalon and mesencephalon beneath the posterior commissure at the point where the axons cross the midline.

It is found in the secreted. Its subcellular location is the extracellular space. Involved in the modulation of neuronal aggregation. May be involved in developmental events during the formation of the central nervous system. The sequence is that of SCO-spondin (SSPO) from Bos taurus (Bovine).